The following is a 347-amino-acid chain: Homoisocitrate dehydrogenase (347 aa).

68-70 contacts NADH; that stretch reads ITS. Residue Ser70 coordinates (2R,3S)-homoisocitrate. Ser81 is subject to Phosphoserine. Residues Arg87, Arg97, Arg128, Tyr135, Lys181, and Asn183 each coordinate (2R,3S)-homoisocitrate. Position 183 (Asn183) interacts with NADH. Asp213, Asp237, and Asp241 together coordinate Mg(2+). NADH is bound by residues 270 to 274 and Asn282; that span reads GSAPD.

The protein belongs to the isocitrate and isopropylmalate dehydrogenases family. The cofactor is Mg(2+).

It carries out the reaction (2R,3S)-homoisocitrate + NAD(+) = 2-oxoadipate + CO2 + NADH. It catalyses the reaction (2R,3S)-iso(homo)2citrate + NAD(+) = 2-oxoheptanedioate + CO2 + NADH. The catalysed reaction is (2R,3S)-iso(homo)3citrate + NAD(+) = 2-oxosuberate + CO2 + NADH. It functions in the pathway organic acid metabolism; 2-oxosuberate biosynthesis. In terms of biological role, catalyzes the NAD-dependent oxidation and decarboxylation of (2R,3S)-homoisocitrate, (2R,3S)-homo(2)-isocitrate and (2R,3S)-homo(3)-isocitrate, into 2-oxoadipate, 2-oxopimelate (2-oxoheptanedioate), and 2-oxosuberate, respectively. All these substrates are intermediates in the biosynthesis of biotin and of 7-mercaptoheptanoate, a moiety of coenzyme B in methanoarchaea. Is also able to produce 2-oxoazelate from (2R,3S)-homo(4)-isocitrate in vitro, but this substrate is probably not physiologically relevant. Is unable to use any isomer of isocitrate or isopropylmalate as a substrate, and NADP as an oxidant. The polypeptide is Homoisocitrate dehydrogenase (aksF) (Methanocaldococcus jannaschii (strain ATCC 43067 / DSM 2661 / JAL-1 / JCM 10045 / NBRC 100440) (Methanococcus jannaschii)).